The sequence spans 335 residues: tRNA N6-adenosine threonylcarbamoyltransferase (335 aa).

Residues His109, His113, and Tyr130 each contribute to the a divalent metal cation site. Substrate is bound by residues 130-134 (YVSGG), Asp162, Gly177, Glu181, and Asn266. Position 294 (Asp294) interacts with a divalent metal cation.

Belongs to the KAE1 / TsaD family. Component of the EKC/KEOPS complex composed of at least GON7, TP53RK, TPRKB, OSGEP and LAGE3; the whole complex dimerizes. It depends on a divalent metal cation as a cofactor. Widely expressed at low level. Expressed at intermediate level in lung. Weakly expressed in testis, skeletal muscle, kidney, liver, spleen, brain and heart.

It is found in the cytoplasm. The protein localises to the nucleus. It catalyses the reaction L-threonylcarbamoyladenylate + adenosine(37) in tRNA = N(6)-L-threonylcarbamoyladenosine(37) in tRNA + AMP + H(+). Its function is as follows. Component of the EKC/KEOPS complex that is required for the formation of a threonylcarbamoyl group on adenosine at position 37 (t(6)A37) in tRNAs that read codons beginning with adenine. The complex is probably involved in the transfer of the threonylcarbamoyl moiety of threonylcarbamoyl-AMP (TC-AMP) to the N6 group of A37. OSGEP likely plays a direct catalytic role in this reaction, but requires other protein(s) of the complex to fulfill this activity. This chain is tRNA N6-adenosine threonylcarbamoyltransferase (Osgep), found in Mus musculus (Mouse).